Here is a 61-residue protein sequence, read N- to C-terminus: uncharacterized protein (61 aa).

This is an uncharacterized protein from Haemophilus influenzae (strain ATCC 51907 / DSM 11121 / KW20 / Rd).